The following is a 196-amino-acid chain: Probable thymidylate kinase (196 aa).

7–14 contributes to the ATP binding site; that stretch reads GIDGAGKT.

This sequence belongs to the thymidylate kinase family.

It catalyses the reaction dTMP + ATP = dTDP + ADP. This chain is Probable thymidylate kinase (tmk), found in Archaeoglobus fulgidus (strain ATCC 49558 / DSM 4304 / JCM 9628 / NBRC 100126 / VC-16).